The chain runs to 828 residues: Periplasmic nitrate reductase (828 aa).

The tat-type signal signal peptide spans 1-31 (MKLSRRSFMKANAVAAAAAAAGLSVPGVARA). Residues 39-95 (IKWDKAPCRFCGTGCGVLVGTQQGRVVACQGDPDAPVNRGLNCIKGYFLPKIMYGKD) enclose the 4Fe-4S Mo/W bis-MGD-type domain. [4Fe-4S] cluster-binding residues include cysteine 46, cysteine 49, cysteine 53, and cysteine 81. Mo-bis(molybdopterin guanine dinucleotide) is bound by residues lysine 83, glutamine 150, asparagine 175, cysteine 179, 212 to 219 (WGANMAEM), 243 to 247 (STYQH), 262 to 264 (QSD), methionine 372, glutamine 376, asparagine 482, 508 to 509 (SD), lysine 531, aspartate 558, and 718 to 727 (TGRVLEHWHT). Substrate is bound at residue phenylalanine 794. The Mo-bis(molybdopterin guanine dinucleotide) site is built by asparagine 802 and lysine 819.

Belongs to the prokaryotic molybdopterin-containing oxidoreductase family. NasA/NapA/NarB subfamily. Component of the periplasmic nitrate reductase NapAB complex composed of NapA and NapB. [4Fe-4S] cluster serves as cofactor. Mo-bis(molybdopterin guanine dinucleotide) is required as a cofactor. Predicted to be exported by the Tat system. The position of the signal peptide cleavage has not been experimentally proven.

It localises to the periplasm. The catalysed reaction is 2 Fe(II)-[cytochrome] + nitrate + 2 H(+) = 2 Fe(III)-[cytochrome] + nitrite + H2O. In terms of biological role, catalytic subunit of the periplasmic nitrate reductase complex NapAB. Receives electrons from NapB and catalyzes the reduction of nitrate to nitrite. The protein is Periplasmic nitrate reductase of Shigella boydii serotype 18 (strain CDC 3083-94 / BS512).